Here is a 494-residue protein sequence, read N- to C-terminus: MKNEKLKVDNHIHNNIQFIDCLEFWVSNAKSFIKSFLQPMNFEVIGTRFNDERSRIQYLLLNNVISRSNLQNQFQIENNSYIKPIQGNQFIKVTSSISPNDLDFHSKIQKHGDFIQNISFYCNDINLAYNKSINNGAKSVQLPMKEYFKNCKDIVETAIIESPFKDLQHTFINRNITSFDDNNNNNYDNNKEIFGNPLFLYPEFQEIKDKELFKIEKEDSSSINGCTGSLDHIATCIKNGEMNYFVEWYRKCLGFKLLSDKDSVATDESENFENELILDKNFYVITKSDFKYTKKENIGLKMAVLSNQPLNTSFHKTPPIQFVISEAIQGGEGQIEQFIHYFGGEGVQHLAFNSNNIFKAVEIAKSQKLEFVYIPQSYYSKLDERLKHLFPNSIPKILKENLMKFGILIDSDAITNTNENNSNNNNNNDSQNNTEINQNIGYIKQIFTKYINDRPTMFFELIERSNALGFGKGNIIALFESLEKESSGSQLKSD.

2 VOC domains span residues 18–174 (FIDC…FINR) and 229–408 (SLDH…FGIL). Residues histidine 232, histidine 349, and glutamate 460 each contribute to the Fe cation site.

Belongs to the 4HPPD family. The cofactor is Fe cation.

Its function is as follows. May have dioxygenase activity. This is an uncharacterized protein from Dictyostelium discoideum (Social amoeba).